A 111-amino-acid chain; its full sequence is Fertilization-influencing membrane protein (111 aa).

The first 23 residues, 1-23, serve as a signal peptide directing secretion; that stretch reads MKLWLWVAVGVWMLMAELGTIET. Residues 85 to 105 form a helical membrane-spanning segment; sequence ILVGTLVVAFFFLLFQFCLHV.

In terms of tissue distribution, testis-specific.

The protein localises to the cell membrane. It is found in the secreted. Functionally, plays a role in sperm-oocyte fusion process during fertilization. The protein is Fertilization-influencing membrane protein of Mus musculus (Mouse).